The primary structure comprises 252 residues: Triosephosphate isomerase (252 aa).

Asn10–Lys12 is a substrate binding site. The active-site Electrophile is His96. Residue Glu168 is the Proton acceptor of the active site. Substrate is bound by residues Gly174, Ser214, and Gly235–Gly236.

The protein belongs to the triosephosphate isomerase family. In terms of assembly, homodimer.

It is found in the cytoplasm. The enzyme catalyses D-glyceraldehyde 3-phosphate = dihydroxyacetone phosphate. It participates in carbohydrate biosynthesis; gluconeogenesis. It functions in the pathway carbohydrate degradation; glycolysis; D-glyceraldehyde 3-phosphate from glycerone phosphate: step 1/1. Involved in the gluconeogenesis. Catalyzes stereospecifically the conversion of dihydroxyacetone phosphate (DHAP) to D-glyceraldehyde-3-phosphate (G3P). This is Triosephosphate isomerase from Lactobacillus helveticus (strain DPC 4571).